The chain runs to 485 residues: Phenylalanine--tRNA ligase alpha subunit, cytoplasmic (485 aa).

Residues Thr318, 360–362, and Tyr400 contribute to the L-phenylalanine site; that span reads QIE. Glu402 contributes to the Mg(2+) binding site. Phe426 contributes to the L-phenylalanine binding site.

It belongs to the class-II aminoacyl-tRNA synthetase family. Phe-tRNA synthetase alpha subunit type 2 subfamily. In terms of assembly, tetramer of two alpha and two beta subunits. It depends on Mg(2+) as a cofactor.

Its subcellular location is the cytoplasm. It localises to the cytosol. It catalyses the reaction tRNA(Phe) + L-phenylalanine + ATP = L-phenylalanyl-tRNA(Phe) + AMP + diphosphate + H(+). This chain is Phenylalanine--tRNA ligase alpha subunit, cytoplasmic, found in Arabidopsis thaliana (Mouse-ear cress).